A 113-amino-acid chain; its full sequence is Hydrogenase maturation factor HypA (113 aa).

Residue His2 coordinates Ni(2+). The Zn(2+) site is built by Cys73, Cys76, Cys89, and Cys92.

The protein belongs to the HypA/HybF family.

Its function is as follows. Involved in the maturation of [NiFe] hydrogenases. Required for nickel insertion into the metal center of the hydrogenase. This chain is Hydrogenase maturation factor HypA, found in Chlorobium phaeobacteroides (strain BS1).